The primary structure comprises 335 residues: Nucleoid-associated protein PC1_1634 (335 aa).

It belongs to the YejK family.

The protein resides in the cytoplasm. Its subcellular location is the nucleoid. The chain is Nucleoid-associated protein PC1_1634 from Pectobacterium carotovorum subsp. carotovorum (strain PC1).